A 722-amino-acid chain; its full sequence is Ribosomal RNA large subunit methyltransferase K/L (722 aa).

Residues 55-167 enclose the THUMP domain; that stretch reads TGYRACLWSR…GNEGTLYLDL (113 aa).

This sequence belongs to the methyltransferase superfamily. RlmKL family.

The protein localises to the cytoplasm. The catalysed reaction is guanosine(2445) in 23S rRNA + S-adenosyl-L-methionine = N(2)-methylguanosine(2445) in 23S rRNA + S-adenosyl-L-homocysteine + H(+). It carries out the reaction guanosine(2069) in 23S rRNA + S-adenosyl-L-methionine = N(2)-methylguanosine(2069) in 23S rRNA + S-adenosyl-L-homocysteine + H(+). Specifically methylates the guanine in position 2445 (m2G2445) and the guanine in position 2069 (m7G2069) of 23S rRNA. In Desulfotalea psychrophila (strain LSv54 / DSM 12343), this protein is Ribosomal RNA large subunit methyltransferase K/L.